Reading from the N-terminus, the 354-residue chain is MPDAKGRRIALGCEGSANKLGIGIIAHDPITGEALVLSNVRDTFVSPPGTGFLPKDTARHHRAYFVRVAKKALALSGVSISEIDCICYTKGPGMGGPLTSVAVGARTLALLWGKELVGVNHCVGHIEMGRAITGASNPVVLYVSGGNTQVIAYAEQRYRIFGETLDIAVGNCLDRFARTLEISNDPAPGYNIEQLAKQGGRVLLDLPYAVKGMDCSFSGILGRADDLAAQMKAGEPGPDGEPFTPADLCFSLQETVFAMLVEITERAMAHVGSNQVLIVGGVGCNERLQEMMGAMAAERGGSVYATDERFCIDNGIMIAHAGLLAYETGFRTPLDESTCTQRFRTDEVFVKWRD.

Positions 121, 125, and 142 each coordinate a divalent metal cation. Substrate-binding positions include Tyr-142–Gly-146, Asp-174, Gly-189, Glu-193, and Asn-285. Residue Asp-313 coordinates a divalent metal cation.

It belongs to the KAE1 / TsaD family. As to quaternary structure, component of the EKC/KEOPS complex composed of at least bud32, cgi121, gon7, kae1 and pcc1; the whole complex dimerizes. It depends on a divalent metal cation as a cofactor.

It localises to the cytoplasm. It is found in the nucleus. It carries out the reaction L-threonylcarbamoyladenylate + adenosine(37) in tRNA = N(6)-L-threonylcarbamoyladenosine(37) in tRNA + AMP + H(+). Functionally, component of the EKC/KEOPS complex that is required for the formation of a threonylcarbamoyl group on adenosine at position 37 (t(6)A37) in tRNAs that read codons beginning with adenine. The complex is probably involved in the transfer of the threonylcarbamoyl moiety of threonylcarbamoyl-AMP (TC-AMP) to the N6 group of A37. Kae1 likely plays a direct catalytic role in this reaction, but requires other protein(s) of the complex to fulfill this activity. The EKC/KEOPS complex also promotes both telomere uncapping and telomere elongation. The complex is required for efficient recruitment of transcriptional coactivators. This Neurospora crassa (strain ATCC 24698 / 74-OR23-1A / CBS 708.71 / DSM 1257 / FGSC 987) protein is tRNA N6-adenosine threonylcarbamoyltransferase (gpe-1).